The following is a 247-amino-acid chain: Homeobox-leucine zipper protein HOX15 (247 aa).

Residues 1-44 (MAQDDEDVGLALGLSLGSGGHRRQRESRDEAPSSAAASLLTLRL) form a disordered region. The segment covering 32 to 44 (PSSAAASLLTLRL) has biased composition (low complexity). The segment at residues 91–150 (NSRKKLRLSKEQSALLEDRFKEHSTLNPKQKVALAKQLNLRPRQVEVWFQNRRARTKLKQ) is a DNA-binding region (homeobox). Residues 149–193 (KQTEVDCELLKRCCETLTEENRRLHRELQQLRALTHSTAAGFFMA) are leucine-zipper. Residues 221–247 (SPTAAADRTNKPTAPHLFSPFAKSAAC) form a disordered region.

The protein belongs to the HD-ZIP homeobox family. Class II subfamily. Expressed in seedlings, stems, leaf blades and panicles.

The protein resides in the nucleus. Its function is as follows. Probable transcription factor. The polypeptide is Homeobox-leucine zipper protein HOX15 (HOX15) (Oryza sativa subsp. japonica (Rice)).